Consider the following 177-residue polypeptide: Coatomer subunit zeta-1 (177 aa).

An N-acetylmethionine modification is found at Met1.

It belongs to the adaptor complexes small subunit family. In terms of assembly, oligomeric complex that consists of at least the alpha, beta, beta', gamma, delta, epsilon and zeta subunits.

The protein localises to the cytoplasm. The protein resides in the golgi apparatus membrane. It localises to the cytoplasmic vesicle. Its subcellular location is the COPI-coated vesicle membrane. The coatomer is a cytosolic protein complex that binds to dilysine motifs and reversibly associates with Golgi non-clathrin-coated vesicles, which further mediate biosynthetic protein transport from the ER, via the Golgi up to the trans Golgi network. Coatomer complex is required for budding from Golgi membranes, and is essential for the retrograde Golgi-to-ER transport of dilysine-tagged proteins. The zeta subunit may be involved in regulating the coat assembly and, hence, the rate of biosynthetic protein transport due to its association-dissociation properties with the coatomer complex. This chain is Coatomer subunit zeta-1 (COPZ1), found in Homo sapiens (Human).